Consider the following 310-residue polypeptide: Terpene synthase 6 (310 aa).

The short motif at 93-98 (DDFYFE) is the DDxx(x)D/E motif element. Residues 222–230 (NDCYSFNKE) carry the NDxxSxxxD/E motif motif.

The protein belongs to the terpene synthase family.

The catalysed reaction is (2E,6E)-farnesyl diphosphate = (E)-beta-farnesene + diphosphate. It catalyses the reaction (2E,6E)-farnesyl diphosphate = (1S,2S,4R)-beta-elemene + diphosphate. It carries out the reaction (2E,6E)-farnesyl diphosphate = (3E,6E)-alpha-farnesene + diphosphate. Its function is as follows. Terpene synthase that converts its substrate farnesyl diphosphate (FPP) into the sesquiterpenes beta-elemene, (E)-beta-farnesene and (E,E)-alpha-farnesene. The sequence is that of Terpene synthase 6 from Dictyostelium purpureum (Slime mold).